Here is a 238-residue protein sequence, read N- to C-terminus: Ribonuclease PH (238 aa).

Phosphate is bound by residues Arg86 and 124-126 (GTR).

It belongs to the RNase PH family. Homohexameric ring arranged as a trimer of dimers.

It catalyses the reaction tRNA(n+1) + phosphate = tRNA(n) + a ribonucleoside 5'-diphosphate. Its function is as follows. Phosphorolytic 3'-5' exoribonuclease that plays an important role in tRNA 3'-end maturation. Removes nucleotide residues following the 3'-CCA terminus of tRNAs; can also add nucleotides to the ends of RNA molecules by using nucleoside diphosphates as substrates, but this may not be physiologically important. Probably plays a role in initiation of 16S rRNA degradation (leading to ribosome degradation) during starvation. This chain is Ribonuclease PH, found in Phenylobacterium zucineum (strain HLK1).